The primary structure comprises 61 residues: Photosystem II reaction center protein K (61 aa).

Positions 1 to 24 (MLNTFSLIGICLNSTLFSSSFFFG) are excised as a propeptide. The helical transmembrane segment at 36-56 (IVDIMPVIPLFFFLLAFVWQA) threads the bilayer.

It belongs to the PsbK family. As to quaternary structure, PSII is composed of 1 copy each of membrane proteins PsbA, PsbB, PsbC, PsbD, PsbE, PsbF, PsbH, PsbI, PsbJ, PsbK, PsbL, PsbM, PsbT, PsbX, PsbY, PsbZ, Psb30/Ycf12, at least 3 peripheral proteins of the oxygen-evolving complex and a large number of cofactors. It forms dimeric complexes.

Its subcellular location is the plastid. The protein resides in the chloroplast thylakoid membrane. Its function is as follows. One of the components of the core complex of photosystem II (PSII). PSII is a light-driven water:plastoquinone oxidoreductase that uses light energy to abstract electrons from H(2)O, generating O(2) and a proton gradient subsequently used for ATP formation. It consists of a core antenna complex that captures photons, and an electron transfer chain that converts photonic excitation into a charge separation. The chain is Photosystem II reaction center protein K from Nicotiana tomentosiformis (Tobacco).